A 217-amino-acid polypeptide reads, in one-letter code: Small ribosomal subunit protein uS3 (217 aa).

The 69-residue stretch at 38–106 (IRQLIQTKLA…QVHINIVEIK (69 aa)) folds into the KH type-2 domain.

It belongs to the universal ribosomal protein uS3 family. As to quaternary structure, part of the 30S ribosomal subunit. Forms a tight complex with proteins S10 and S14.

Functionally, binds the lower part of the 30S subunit head. Binds mRNA in the 70S ribosome, positioning it for translation. This is Small ribosomal subunit protein uS3 from Lactococcus lactis subsp. lactis (strain IL1403) (Streptococcus lactis).